A 127-amino-acid polypeptide reads, in one-letter code: UPF0166 protein PH1503 (127 aa).

This sequence belongs to the UPF0166 family.

The protein is UPF0166 protein PH1503 of Pyrococcus horikoshii (strain ATCC 700860 / DSM 12428 / JCM 9974 / NBRC 100139 / OT-3).